The primary structure comprises 531 residues: O-phosphoserine--tRNA(Cys) ligase (531 aa).

Residues 189-191 (HMT), 234-236 (SAS), 276-277 (YY), and Asn319 each bind substrate.

This sequence belongs to the class-II aminoacyl-tRNA synthetase family. O-phosphoseryl-tRNA(Cys) synthetase subfamily. Homotetramer. Interacts with SepCysS.

It carries out the reaction tRNA(Cys) + O-phospho-L-serine + ATP = O-phospho-L-seryl-tRNA(Cys) + AMP + diphosphate. Catalyzes the attachment of O-phosphoserine (Sep) to tRNA(Cys). The protein is O-phosphoserine--tRNA(Cys) ligase of Methanospirillum hungatei JF-1 (strain ATCC 27890 / DSM 864 / NBRC 100397 / JF-1).